A 438-amino-acid chain; its full sequence is Serine--tRNA ligase (438 aa).

Position 235 to 237 (235 to 237) interacts with L-serine; that stretch reads TAE. ATP is bound by residues 266–268 and Val282; that span reads RKE. Glu289 is an L-serine binding site. 355 to 358 is an ATP binding site; it reads ELVS. Thr393 is an L-serine binding site.

The protein belongs to the class-II aminoacyl-tRNA synthetase family. Type-1 seryl-tRNA synthetase subfamily. In terms of assembly, homodimer. The tRNA molecule binds across the dimer.

It carries out the reaction tRNA(Ser) + L-serine + ATP = L-seryl-tRNA(Ser) + AMP + diphosphate + H(+). It catalyses the reaction tRNA(Sec) + L-serine + ATP = L-seryl-tRNA(Sec) + AMP + diphosphate + H(+). It participates in aminoacyl-tRNA biosynthesis; selenocysteinyl-tRNA(Sec) biosynthesis; L-seryl-tRNA(Sec) from L-serine and tRNA(Sec): step 1/1. In terms of biological role, catalyzes the attachment of serine to tRNA(Ser). Is also able to aminoacylate tRNA(Sec) with serine, to form the misacylated tRNA L-seryl-tRNA(Sec), which will be further converted into selenocysteinyl-tRNA(Sec). This is Serine--tRNA ligase from Helianthus annuus (Common sunflower).